An 853-amino-acid chain; its full sequence is Dynein axonemal assembly factor 5 (853 aa).

Ala-2 carries the N-acetylalanine modification. HEAT repeat units lie at residues 69 to 107 (GPWA…RAAR), 200 to 238 (HMQS…FGSG), 240 to 276 (SVDD…NLRD), 278 to 316 (YSFL…QWQQ), 374 to 412 (RVKA…DEEK), 597 to 636 (GEAL…RPKD), 694 to 732 (QEAQ…NSGD), 736 to 774 (PEKF…CIES), and 782 to 820 (QSSV…LFPD).

The protein belongs to the DNAAF5 family. As to quaternary structure, interacts with DNAI2; probably involved in outer arm dynein assembly. As to expression, expressed in ciliated cells including ependymal cells lining the lateral ventricles and multiciliated epithelium of oviduct ampulla.

It localises to the cytoplasm. The protein resides in the cytoplasmic granule. Its function is as follows. Cytoplasmic protein involved in the delivery of the dynein machinery to the motile cilium. It is required for the assembly of the axonemal dynein inner and outer arms, two structures attached to the peripheral outer doublet A microtubule of the axoneme, that play a crucial role in cilium motility. The sequence is that of Dynein axonemal assembly factor 5 from Mus musculus (Mouse).